A 263-amino-acid chain; its full sequence is Sepiapterin reductase (263 aa).

NADP(+)-binding positions include Gly-18–Gly-24, Arg-46–Thr-47, and Asp-73–Leu-74. Substrate contacts are provided by residues Ser-160–Leu-161 and Tyr-173. Lys-177 contributes to the NADP(+) binding site. Residue Gly-202 participates in substrate binding. Leu-204 to His-209 provides a ligand contact to NADP(+). Asp-260 is a binding site for substrate.

It belongs to the sepiapterin reductase family. In terms of assembly, homodimer.

Its subcellular location is the cytoplasm. It catalyses the reaction L-erythro-7,8-dihydrobiopterin + NADP(+) = L-sepiapterin + NADPH + H(+). It carries out the reaction (6R)-L-erythro-5,6,7,8-tetrahydrobiopterin + 2 NADP(+) = 6-pyruvoyl-5,6,7,8-tetrahydropterin + 2 NADPH + 2 H(+). Its function is as follows. Catalyzes the final one or two reductions in tetra-hydrobiopterin biosynthesis to form 5,6,7,8-tetrahydrobiopterin. In Xenopus laevis (African clawed frog), this protein is Sepiapterin reductase (spr).